Here is a 184-residue protein sequence, read N- to C-terminus: Peptidyl-tRNA hydrolase (184 aa).

Tyrosine 14 serves as a coordination point for tRNA. Histidine 19 serves as the catalytic Proton acceptor. Positions 64, 66, and 112 each coordinate tRNA.

It belongs to the PTH family. As to quaternary structure, monomer.

The protein localises to the cytoplasm. The catalysed reaction is an N-acyl-L-alpha-aminoacyl-tRNA + H2O = an N-acyl-L-amino acid + a tRNA + H(+). In terms of biological role, hydrolyzes ribosome-free peptidyl-tRNAs (with 1 or more amino acids incorporated), which drop off the ribosome during protein synthesis, or as a result of ribosome stalling. Functionally, catalyzes the release of premature peptidyl moieties from peptidyl-tRNA molecules trapped in stalled 50S ribosomal subunits, and thus maintains levels of free tRNAs and 50S ribosomes. The protein is Peptidyl-tRNA hydrolase of Listeria innocua serovar 6a (strain ATCC BAA-680 / CLIP 11262).